The chain runs to 277 residues: Hydroxypyruvate/pyruvate aldolase (277 aa).

His-54 acts as the Proton acceptor in catalysis. Positions 158 and 184 each coordinate a divalent metal cation.

The protein belongs to the HpcH/HpaI aldolase family. Requires a divalent metal cation as cofactor.

The enzyme catalyses D-glyceraldehyde + 3-hydroxypyruvate = (3R,4S,5R)-3,4,5,6-tetrahydroxy-2-oxohexanoate. It carries out the reaction D-glyceraldehyde + 3-hydroxypyruvate = 2-dehydro-D-gluconate. It catalyses the reaction D-glyceraldehyde + 3-hydroxypyruvate = 2-dehydro-D-galactonate. The catalysed reaction is D-glyceraldehyde + pyruvate = 2-dehydro-3-deoxy-L-galactonate. Its function is as follows. Aldolase which can catalyze in vitro the aldolisation reaction between hydroxypyruvate (HPA) or pyruvate (PA) and D-glyceraldehyde (D-GA). The condensation of hydroxypyruvate and D-glyceraldehyde produces (3R,4S,5R)-3,4,5,6-tetrahydroxy-2-oxohexanoate as the major product, 2-dehydro-D-gluconate and 2-dehydro-D-galactonate. The condensation of pyruvate and D-glyceraldehyde produces 2-dehydro-3-deoxy-L-galactonate as the major product. This is Hydroxypyruvate/pyruvate aldolase from Deinococcus radiodurans (strain ATCC 13939 / DSM 20539 / JCM 16871 / CCUG 27074 / LMG 4051 / NBRC 15346 / NCIMB 9279 / VKM B-1422 / R1).